A 145-amino-acid polypeptide reads, in one-letter code: Putative pre-16S rRNA nuclease (145 aa).

Belongs to the YqgF nuclease family.

The protein localises to the cytoplasm. In terms of biological role, could be a nuclease involved in processing of the 5'-end of pre-16S rRNA. This chain is Putative pre-16S rRNA nuclease, found in Prochlorococcus marinus (strain MIT 9211).